Reading from the N-terminus, the 217-residue chain is Putative thymidylate synthase (217 aa).

Residue Cys-139 is part of the active site.

The protein belongs to the thymidylate synthase family. Archaeal-type ThyA subfamily. Monomer.

The protein resides in the cytoplasm. It participates in pyrimidine metabolism; dTTP biosynthesis. May catalyze the biosynthesis of dTMP using an unknown cosubstrate. The sequence is that of Putative thymidylate synthase from Methanosarcina barkeri (strain Fusaro / DSM 804).